The chain runs to 72 residues: Translation initiation factor IF-1 (72 aa).

Residues 1 to 72 form the S1-like domain; it reads MSKEDMIEFS…TKGRITFRFK (72 aa).

Belongs to the IF-1 family. Component of the 30S ribosomal translation pre-initiation complex which assembles on the 30S ribosome in the order IF-2 and IF-3, IF-1 and N-formylmethionyl-tRNA(fMet); mRNA recruitment can occur at any time during PIC assembly.

It is found in the cytoplasm. Functionally, one of the essential components for the initiation of protein synthesis. Stabilizes the binding of IF-2 and IF-3 on the 30S subunit to which N-formylmethionyl-tRNA(fMet) subsequently binds. Helps modulate mRNA selection, yielding the 30S pre-initiation complex (PIC). Upon addition of the 50S ribosomal subunit IF-1, IF-2 and IF-3 are released leaving the mature 70S translation initiation complex. This chain is Translation initiation factor IF-1, found in Acidiphilium cryptum (strain JF-5).